Here is a 261-residue protein sequence, read N- to C-terminus: uncharacterized protein (261 aa).

The ABC transporter domain maps to 1–236 (MEIKEITIIG…SRKINEVDNW (236 aa)). Residue 36-43 (GPTGSGKS) participates in ATP binding.

It belongs to the ABC transporter superfamily.

This is an uncharacterized protein from Methanocaldococcus jannaschii (strain ATCC 43067 / DSM 2661 / JAL-1 / JCM 10045 / NBRC 100440) (Methanococcus jannaschii).